The chain runs to 325 residues: Probable 4-hydroxy-tetrahydrodipicolinate reductase 2, chloroplastic (325 aa).

A chloroplast-targeting transit peptide spans 1–32 (MLSLRPPCTLSPAPWRRRRTLHGAAGTPQRVS). NAD(+) contacts are provided by residues 57–62 (GCTGKM), 149–151 (GTT), and 172–175 (SPQM). The active-site Proton donor/acceptor is His208. The Proton donor role is filled by Lys212. 217 to 218 (GT) contacts (S)-2,3,4,5-tetrahydrodipicolinate.

The protein belongs to the DapB family.

The protein resides in the plastid. It localises to the chloroplast. The enzyme catalyses (S)-2,3,4,5-tetrahydrodipicolinate + NAD(+) + H2O = (2S,4S)-4-hydroxy-2,3,4,5-tetrahydrodipicolinate + NADH + H(+). It catalyses the reaction (S)-2,3,4,5-tetrahydrodipicolinate + NADP(+) + H2O = (2S,4S)-4-hydroxy-2,3,4,5-tetrahydrodipicolinate + NADPH + H(+). Its pathway is amino-acid biosynthesis; L-lysine biosynthesis via DAP pathway; (S)-tetrahydrodipicolinate from L-aspartate: step 4/4. Functionally, catalyzes the conversion of 4-hydroxy-tetrahydrodipicolinate (HTPA) to tetrahydrodipicolinate. This Oryza sativa subsp. japonica (Rice) protein is Probable 4-hydroxy-tetrahydrodipicolinate reductase 2, chloroplastic (DAPB2).